Reading from the N-terminus, the 126-residue chain is Aspartate 1-decarboxylase (126 aa).

S25 (schiff-base intermediate with substrate; via pyruvic acid) is an active-site residue. S25 carries the pyruvic acid (Ser) modification. T57 serves as a coordination point for substrate. The active-site Proton donor is Y58. Substrate is bound at residue 73–75; the sequence is GSA.

The protein belongs to the PanD family. Heterooctamer of four alpha and four beta subunits. Pyruvate serves as cofactor. In terms of processing, is synthesized initially as an inactive proenzyme, which is activated by self-cleavage at a specific serine bond to produce a beta-subunit with a hydroxyl group at its C-terminus and an alpha-subunit with a pyruvoyl group at its N-terminus.

The protein resides in the cytoplasm. It carries out the reaction L-aspartate + H(+) = beta-alanine + CO2. It functions in the pathway cofactor biosynthesis; (R)-pantothenate biosynthesis; beta-alanine from L-aspartate: step 1/1. Its function is as follows. Catalyzes the pyruvoyl-dependent decarboxylation of aspartate to produce beta-alanine. In Chromobacterium violaceum (strain ATCC 12472 / DSM 30191 / JCM 1249 / CCUG 213 / NBRC 12614 / NCIMB 9131 / NCTC 9757 / MK), this protein is Aspartate 1-decarboxylase.